Here is a 325-residue protein sequence, read N- to C-terminus: Dimethylsulfide dehydrogenase subunit beta (325 aa).

4Fe-4S ferredoxin-type domains are found at residues 6–35 (ISMV…RNGR), 123–154 (SYYF…KRQE), and 156–185 (GIVL…FNEQ). [4Fe-4S] cluster contacts are provided by cysteine 15, cysteine 18, cysteine 21, cysteine 25, cysteine 132, cysteine 135, and cysteine 140. [3Fe-4S] cluster is bound by residues cysteine 144, cysteine 165, and cysteine 171. The [4Fe-4S] cluster site is built by cysteine 175, cysteine 192, cysteine 195, cysteine 207, and cysteine 211.

Heterotrimer of alpha, beta and gamma subunits. [3Fe-4S] cluster is required as a cofactor. The cofactor is [4Fe-4S] cluster.

It is found in the periplasm. In terms of biological role, electron transfer subunit of the dehydrogenase during anaerobic growth on dimethyl sulfide. This Rhodovulum sulfidophilum (Rhodobacter sulfidophilus) protein is Dimethylsulfide dehydrogenase subunit beta (ddhB).